A 421-amino-acid chain; its full sequence is Fusaric acid cluster transcription factor FUB10 (421 aa).

Residues 16–47 (CDRCRAQKLRCHRDSGHSTDACLRCLKSGIEC) constitute a DNA-binding region (zn(2)-C6 fungal-type). The interval 50–92 (SKARPTGRPPSRQVQPTVVVEQGDTSSSSHTTDSSPSAGGTDM) is disordered. Residues 74 to 86 (TSSSSHTTDSSPS) are compositionally biased toward low complexity.

It is found in the nucleus. Functionally, transcription factor that regulates the expression of the gene cluster that mediates the biosynthesis of fusaric acid, a mycotoxin with low to moderate toxicity to animals and humans, but with high phytotoxic properties. This chain is Fusaric acid cluster transcription factor FUB10, found in Gibberella moniliformis (strain M3125 / FGSC 7600) (Maize ear and stalk rot fungus).